A 1005-amino-acid polypeptide reads, in one-letter code: Probable histidine kinase 4 (1005 aa).

Topologically, residues 1-37 are cytoplasmic; it reads MGVGGGGGGGGGEAAAAVAVEGDEAGKGRRWWRVKVK. Residues 38–58 traverse the membrane as a helical segment; it reads LSTVAVVAWVLASAALWAGLH. Residues 59 to 333 are Extracellular-facing; sequence WRFRRAALHK…YRNKLHVSWS (275 aa). Residues 110–321 form the CHASE domain; it reads HPPALDQDTF…GDPLRKHQMV (212 aa). The helical transmembrane segment at 334-354 threads the bilayer; sequence AITTPSGVFVICMLVGYIIYA. At 355–1005 the chain is on the cytoplasmic side; it reads AWSRYDNVKE…QKFLGPCVSS (651 aa). Residues 389–675 enclose the Histidine kinase domain; the sequence is TVSHEIRTPM…TFTFTAVLRR (287 aa). Residue H392 is modified to Phosphohistidine; by autocatalysis. Response regulatory domains lie at 700 to 829 and 862 to 999; these read SALL…FQAL and NILV…QKFL. 4-aspartylphosphate is present on D912.

Activation probably requires a transfer of a phosphate group between a His in the transmitter domain and an Asp of the receiver domain. As to expression, highly expressed in young leaves and spikelets, and at lower levels in roots, mature leaves and stems.

The protein resides in the cell membrane. The enzyme catalyses ATP + protein L-histidine = ADP + protein N-phospho-L-histidine.. Functionally, cytokinin receptor related to bacterial two-component regulators. Functions as a histidine kinase and transmits the stress signal to a downstream MAPK cascade. This is Probable histidine kinase 4 from Oryza sativa subsp. japonica (Rice).